A 449-amino-acid polypeptide reads, in one-letter code: Glucose-6-phosphate isomerase (449 aa).

Residue Glu291 is the Proton donor of the active site. Catalysis depends on residues His312 and Lys426.

The protein belongs to the GPI family.

It is found in the cytoplasm. The enzyme catalyses alpha-D-glucose 6-phosphate = beta-D-fructose 6-phosphate. The protein operates within carbohydrate biosynthesis; gluconeogenesis. Its pathway is carbohydrate degradation; glycolysis; D-glyceraldehyde 3-phosphate and glycerone phosphate from D-glucose: step 2/4. Its function is as follows. Catalyzes the reversible isomerization of glucose-6-phosphate to fructose-6-phosphate. The protein is Glucose-6-phosphate isomerase of Streptococcus pyogenes serotype M12 (strain MGAS2096).